The following is an 86-amino-acid chain: Anti-adapter protein IraP (86 aa).

Positions 1–38 (MKNLIAELLVKLAQKEEEAKELTVQVEALEIVVTALLR) form a coiled coil.

This sequence belongs to the IraP family. In terms of assembly, interacts with RssB.

It is found in the cytoplasm. Its function is as follows. Inhibits RpoS proteolysis by regulating RssB activity, thereby increasing the stability of the sigma stress factor RpoS especially during phosphate starvation, but also in stationary phase and during nitrogen starvation. Its effect on RpoS stability is due to its interaction with RssB, which probably blocks the interaction of RssB with RpoS, and the consequent delivery of the RssB-RpoS complex to the ClpXP protein degradation pathway. The sequence is that of Anti-adapter protein IraP from Klebsiella pneumoniae (strain 342).